We begin with the raw amino-acid sequence, 762 residues long: 1-phosphatidylinositol 4,5-bisphosphate phosphodiesterase delta-4 (762 aa).

A PH domain is found at 16-124; that stretch reads LLMQEGMPMR…WMRGLQLLVD (109 aa). Residues 26 to 53 form a substrate binding region; the sequence is KVRSKSWKKLRYFRLQNDGMTVWHARQA. EF-hand domains are found at residues 134–169, 170–205, and 206–237; these read RLDQ…MNVE, MDQE…LTKR, and AEVQ…EQKE. Ca(2+) is bound by residues D147, N149, D151, K153, E158, D183, S185, S187, T189, and E194. The short motif at 213–243 is the GBA element; the sequence is ESFSADGQKLTLLEFLDFLREEQKERDCTSE. Residues 290 to 435 form the PI-PLC X-box domain; sequence QDMTQPLNHY…LRRRILVKGK (146 aa). Residue H305 is part of the active site. Residues N306, E335, and D337 each coordinate Ca(2+). H350 is an active-site residue. E384 lines the Ca(2+) pocket. 2 residues coordinate substrate: K433 and K435. Residues 443-471 show a composition bias toward acidic residues; it reads LEYEEEEAEPELEESELALESQFETEPEP. Residues 443–483 are disordered; sequence LEYEEEEAEPELEESELALESQFETEPEPQEQNLQSKDKKK. S457 carries the phosphoserine modification. The PI-PLC Y-box domain maps to 493-609; the sequence is LSSLVIYLKS…GYVLKPDFLR (117 aa). Substrate-binding residues include S522 and R549. A C2 domain is found at 609–736; the sequence is RDIQSSFHPE…QGYRHIHLLS (128 aa). Residues I650, D652, N676, D705, Y706, and D707 each contribute to the Ca(2+) site. The short motif at 731-734 is the PDZ-binding element; the sequence is HIHL.

As to quaternary structure, interacts with GRIP1. Interacts (via GBA motif) with guanine nucleotide-binding protein G(i) alpha subunit GNAI3 (inactive GDP-bound form); low-affinity interaction. The cofactor is Ca(2+).

It localises to the membrane. The protein localises to the nucleus. Its subcellular location is the cytoplasm. The protein resides in the endoplasmic reticulum. The enzyme catalyses a 1,2-diacyl-sn-glycero-3-phospho-(1D-myo-inositol-4,5-bisphosphate) + H2O = 1D-myo-inositol 1,4,5-trisphosphate + a 1,2-diacyl-sn-glycerol + H(+). The catalysed reaction is a 1,2-diacyl-sn-glycero-3-phospho-(1D-myo-inositol) + H2O = 1D-myo-inositol 1-phosphate + a 1,2-diacyl-sn-glycerol + H(+). Hydrolyzes the phosphatidylinositol 4,5-bisphosphate (PIP2) to generate 2 second messenger molecules diacylglycerol (DAG) and inositol 1,4,5-trisphosphate (IP3). DAG mediates the activation of protein kinase C (PKC), while IP3 releases Ca(2+) from intracellular stores. Required for acrosome reaction in sperm during fertilization, probably by acting as an important enzyme for intracellular Ca(2+) mobilization in the zona pellucida-induced acrosome reaction. May play a role in cell growth. Modulates the liver regeneration in cooperation with nuclear PKC. Overexpression up-regulates the Erk signaling pathway and proliferation. The sequence is that of 1-phosphatidylinositol 4,5-bisphosphate phosphodiesterase delta-4 (PLCD4) from Pongo abelii (Sumatran orangutan).